The primary structure comprises 640 residues: Spindle assembly abnormal protein 6 homolog (640 aa).

Positions 40–92 (VHKKDLAVRLTDDADPFFLYNLVISEEDFQSLKSQQGLLVDFSAFPQKFIDLL) constitute a PISA domain. Residues 154–475 (LARCLKCLKE…KQLLKTNENV (322 aa)) adopt a coiled-coil conformation.

In terms of assembly, nine homodimers form a cartwheel structure with an internal diameter of 23 nM and radial spokes connecting to the microtubule triplets.

The protein resides in the cytoplasm. It is found in the cytoskeleton. The protein localises to the microtubule organizing center. Its subcellular location is the centrosome. Central scaffolding component of the centrioles ensuring their 9-fold symmetry. Required for centrosome biogenesis and duplication: required both for mother-centriole-dependent centriole duplication and deuterosome-dependent centriole amplification in multiciliated cells. The sequence is that of Spindle assembly abnormal protein 6 homolog (SASS6) from Gallus gallus (Chicken).